We begin with the raw amino-acid sequence, 395 residues long: Elongation factor Tu (395 aa).

The region spanning 10-204 (KSHVNIGTIG…AVDEYIPTPE (195 aa)) is the tr-type G domain. The segment at 19–26 (GHVDHGKT) is G1. 19–26 (GHVDHGKT) is a binding site for GTP. Thr-26 is a Mg(2+) binding site. The G2 stretch occupies residues 60–64 (GITIN). Positions 81–84 (DCPG) are G3. Residues 81 to 85 (DCPGH) and 136 to 139 (NKMD) contribute to the GTP site. Residues 136–139 (NKMD) form a G4 region. Positions 174–176 (SAL) are G5.

This sequence belongs to the TRAFAC class translation factor GTPase superfamily. Classic translation factor GTPase family. EF-Tu/EF-1A subfamily. Monomer.

It is found in the cytoplasm. It carries out the reaction GTP + H2O = GDP + phosphate + H(+). Its function is as follows. GTP hydrolase that promotes the GTP-dependent binding of aminoacyl-tRNA to the A-site of ribosomes during protein biosynthesis. The sequence is that of Elongation factor Tu from Enterococcus faecalis (strain ATCC 700802 / V583).